The sequence spans 205 residues: Guanylate kinase (205 aa).

In terms of domain architecture, Guanylate kinase-like spans 3 to 181; that stretch reads GSLYIISAPS…ALSELHSIFL (179 aa). 10-17 lines the ATP pocket; it reads APSGAGKT.

The protein belongs to the guanylate kinase family.

The protein localises to the cytoplasm. It carries out the reaction GMP + ATP = GDP + ADP. Functionally, essential for recycling GMP and indirectly, cGMP. This Hydrogenovibrio crunogenus (strain DSM 25203 / XCL-2) (Thiomicrospira crunogena) protein is Guanylate kinase.